The sequence spans 132 residues: Large ribosomal subunit protein uL14 (132 aa).

It belongs to the universal ribosomal protein uL14 family. In terms of assembly, part of the 50S ribosomal subunit. Forms a cluster with proteins L3 and L24e, part of which may contact the 16S rRNA in 2 intersubunit bridges.

Binds to 23S rRNA. Forms part of two intersubunit bridges in the 70S ribosome. This Methanosarcina acetivorans (strain ATCC 35395 / DSM 2834 / JCM 12185 / C2A) protein is Large ribosomal subunit protein uL14.